A 243-amino-acid polypeptide reads, in one-letter code: L-fucose operon activator (243 aa).

In terms of domain architecture, HTH deoR-type spans Met-1–Tyr-57. Positions Leu-19–Asp-38 form a DNA-binding region, H-T-H motif.

In terms of biological role, transcriptional activator of the fuc operon. In Escherichia coli (strain K12), this protein is L-fucose operon activator (fucR).